Here is a 435-residue protein sequence, read N- to C-terminus: MADQESDKNIEIWKIKKLIKGLETARGNGTSMISLIMPPRDQVARVTKMLADEYGTASNIKSRVNRQSVLSAITSAQQRLKLYNKVPPNGLVLYTGTIVTDDGKEKKVTIDFEPFKPINASLYLCDNKFHTEPLNELLESDDKFGFIVMDGNGTLFGTLSGNTREVLHKFTVDLPKKHGRGGQSALRFARLRMEKRHNYVRKTAELATQFYINPATSQPNVSGLILAGSADFKTELSQSELFDPRLQAKILNVVDVSYGGENGFNQAIELSAEILSNVKFIQEKKLIGKYFEEISQDTGKYVFGVEDTLKALEMGAVETLIVWENLDINRYELKNNTTGEIVIKHLGKDQENNQSNFHDAETNAELEVQEKMPLLEWFANEYKRFGCTLEFVTNKSQEGSQFCRGFGGIGGLLRYQLDMRTFDELSDGEVYEDSD.

Residue Ala-2 is modified to N-acetylalanine.

Belongs to the eukaryotic release factor 1 family. In terms of assembly, heterodimer of two subunits, one of which binds GTP.

It is found in the cytoplasm. Directs the termination of nascent peptide synthesis (translation) in response to the termination codons UAA, UAG and UGA. Modulates plant growth and development. This chain is Eukaryotic peptide chain release factor subunit 1-3 (ERF1-3), found in Arabidopsis thaliana (Mouse-ear cress).